Consider the following 495-residue polypeptide: Cytochrome P450 2E1 (495 aa).

Residue 298 to 303 (FAGTET) coordinates substrate. Cys-437 contacts heme.

Belongs to the cytochrome P450 family. In terms of assembly, interacts with chaperones HSP70 and HSP90; this interaction is required for initial targeting to mitochondria. The cofactor is heme.

The protein localises to the endoplasmic reticulum membrane. Its subcellular location is the microsome membrane. It localises to the mitochondrion inner membrane. The enzyme catalyses an organic molecule + reduced [NADPH--hemoprotein reductase] + O2 = an alcohol + oxidized [NADPH--hemoprotein reductase] + H2O + H(+). It catalyses the reaction (5Z,8Z,11Z)-eicosatrienoate + reduced [NADPH--hemoprotein reductase] + O2 = 19-hydroxy-(5Z,8Z,11Z)-eicosatrienoate + oxidized [NADPH--hemoprotein reductase] + H2O + H(+). It carries out the reaction (5Z,8Z,11Z,14Z,17Z)-eicosapentaenoate + reduced [NADPH--hemoprotein reductase] + O2 = 19-hydroxy-(5Z,8Z,11Z,14Z,17Z)-eicosapentaenoate + oxidized [NADPH--hemoprotein reductase] + H2O + H(+). The catalysed reaction is (4Z,7Z,10Z,13Z,16Z,19Z)-docosahexaenoate + reduced [NADPH--hemoprotein reductase] + O2 = 21-hydroxy-(4Z,7Z,10Z,13Z,16Z,19Z)-docosahexaenoate + oxidized [NADPH--hemoprotein reductase] + H2O + H(+). The enzyme catalyses dodecanoate + reduced [NADPH--hemoprotein reductase] + O2 = 11-hydroxydodecanoate + oxidized [NADPH--hemoprotein reductase] + H2O + H(+). It catalyses the reaction tetradecanoate + reduced [NADPH--hemoprotein reductase] + O2 = 13-hydroxytetradecanoate + oxidized [NADPH--hemoprotein reductase] + H2O + H(+). It carries out the reaction 4-nitrophenol + NADPH + O2 + H(+) = 4-nitrocatechol + NADP(+) + H2O. The protein operates within lipid metabolism; fatty acid metabolism. With respect to regulation, the omega-1 hydroxylase activity is stimulated by cytochrome b5. Its function is as follows. A cytochrome P450 monooxygenase involved in the metabolism of fatty acids. Mechanistically, uses molecular oxygen inserting one oxygen atom into a substrate, and reducing the second into a water molecule, with two electrons provided by NADPH via cytochrome P450 reductase (NADPH--hemoprotein reductase). Catalyzes the hydroxylation of carbon-hydrogen bonds. Hydroxylates fatty acids specifically at the omega-1 position displaying the highest catalytic activity for saturated fatty acids. May be involved in the oxidative metabolism of xenobiotics. The chain is Cytochrome P450 2E1 (CYP2E1) from Bos taurus (Bovine).